Reading from the N-terminus, the 292-residue chain is Inositol monophosphatase 2 (292 aa).

Mg(2+) contacts are provided by glutamate 75, aspartate 94, isoleucine 96, aspartate 97, and aspartate 231. A substrate-binding site is contributed by glutamate 75. Substrate contacts are provided by residues 96–99 (IDGT) and aspartate 231.

This sequence belongs to the inositol monophosphatase superfamily. Requires Mg(2+) as cofactor.

It carries out the reaction a myo-inositol phosphate + H2O = myo-inositol + phosphate. Its pathway is polyol metabolism; myo-inositol biosynthesis; myo-inositol from D-glucose 6-phosphate: step 2/2. With respect to regulation, inhibited by Li(+) and Na(+). Functionally, responsible for the provision of inositol required for synthesis of phosphatidylinositol and polyphosphoinositides and involved in the inositol cycle of calcium signaling. The chain is Inositol monophosphatase 2 (INM2) from Saccharomyces cerevisiae (strain ATCC 204508 / S288c) (Baker's yeast).